A 132-amino-acid chain; its full sequence is MSMTDPIADMLVRINNAASVGKPNVRFPFSRVKLAIALVLKHEGYIFDAKVIQGDNSKSDIEIVLKYFEGRPVIRILKRVSRSGLRKYCGKAELPKVLGGLGISIISTSKGIMIDSKARESGVGGEVLCFVA.

Belongs to the universal ribosomal protein uS8 family. In terms of assembly, part of the 30S ribosomal subunit. Contacts proteins S5 and S12.

Its function is as follows. One of the primary rRNA binding proteins, it binds directly to 16S rRNA central domain where it helps coordinate assembly of the platform of the 30S subunit. The protein is Small ribosomal subunit protein uS8 of Xylella fastidiosa (strain 9a5c).